Here is a 306-residue protein sequence, read N- to C-terminus: UDP-N-acetylenolpyruvoylglucosamine reductase (306 aa).

Positions 25–188 (RVGGPADWLF…IEARFRAEPG (164 aa)) constitute an FAD-binding PCMH-type domain. Residue Arg168 is part of the active site. Residues 199-214 (EQLARRDASQPTKDRS) show a composition bias toward basic and acidic residues. The interval 199 to 232 (EQLARRDASQPTKDRSAGSTFRNPAGYSSTGRAD) is disordered. Residues 215–229 (AGSTFRNPAGYSSTG) are compositionally biased toward polar residues. Catalysis depends on Ser217, which acts as the Proton donor. Glu299 is an active-site residue.

Belongs to the MurB family. Requires FAD as cofactor.

The protein resides in the cytoplasm. The catalysed reaction is UDP-N-acetyl-alpha-D-muramate + NADP(+) = UDP-N-acetyl-3-O-(1-carboxyvinyl)-alpha-D-glucosamine + NADPH + H(+). It functions in the pathway cell wall biogenesis; peptidoglycan biosynthesis. Cell wall formation. The chain is UDP-N-acetylenolpyruvoylglucosamine reductase from Paracoccus denitrificans (strain Pd 1222).